Reading from the N-terminus, the 191-residue chain is Outer membrane lipoprotein DolP (191 aa).

A signal peptide spans 1–18 (MKAFSPLAVLISALLLQG). Residue C19 is the site of N-palmitoyl cysteine attachment. C19 is lipidated: S-diacylglycerol cysteine. 2 BON domains span residues 46-115 (DDGT…RQGQ) and 124-191 (NDTW…TYIK).

The protein belongs to the lipoprotein DolP family.

The protein resides in the cell outer membrane. Functionally, plays an important role in maintaining outer membrane integrity. Contributes to virulence. This chain is Outer membrane lipoprotein DolP, found in Salmonella typhimurium (strain LT2 / SGSC1412 / ATCC 700720).